A 363-amino-acid chain; its full sequence is 3-dehydroquinate synthase (363 aa).

Residues 75–80, 109–113, 133–134, lysine 146, lysine 155, and 173–176 contribute to the NAD(+) site; these read DAEEGK, GAVTD, TS, and TLQT. The Zn(2+) site is built by glutamate 188, histidine 251, and histidine 267.

The protein belongs to the sugar phosphate cyclases superfamily. Dehydroquinate synthase family. Co(2+) serves as cofactor. The cofactor is Zn(2+). Requires NAD(+) as cofactor.

Its subcellular location is the cytoplasm. The catalysed reaction is 7-phospho-2-dehydro-3-deoxy-D-arabino-heptonate = 3-dehydroquinate + phosphate. Its pathway is metabolic intermediate biosynthesis; chorismate biosynthesis; chorismate from D-erythrose 4-phosphate and phosphoenolpyruvate: step 2/7. Catalyzes the conversion of 3-deoxy-D-arabino-heptulosonate 7-phosphate (DAHP) to dehydroquinate (DHQ). This is 3-dehydroquinate synthase from Paenarthrobacter aurescens (strain TC1).